The following is a 228-amino-acid chain: Flavin-dependent thymidylate synthase (228 aa).

Residues 1–217 (MEYKILDKGF…PWTFEAFLKF (217 aa)) form the ThyX domain. Residues Thr55, 78–80 (RHR), and Glu86 contribute to the FAD site. Residues 75-78 (QWFR), 86-90 (EASLR), and Arg156 contribute to the dUMP site. Positions 78 to 88 (RHRIGSFNEAS) match the ThyX motif motif. FAD is bound by residues 172–174 (NAR) and Asn178. Arg183 contacts dUMP. The active-site Involved in ionization of N3 of dUMP, leading to its activation is the Arg183.

Belongs to the thymidylate synthase ThyX family. Homotetramer. FAD serves as cofactor.

The enzyme catalyses dUMP + (6R)-5,10-methylene-5,6,7,8-tetrahydrofolate + NADPH + H(+) = dTMP + (6S)-5,6,7,8-tetrahydrofolate + NADP(+). The protein operates within pyrimidine metabolism; dTTP biosynthesis. Its function is as follows. Catalyzes the reductive methylation of 2'-deoxyuridine-5'-monophosphate (dUMP) to 2'-deoxythymidine-5'-monophosphate (dTMP) while utilizing 5,10-methylenetetrahydrofolate (mTHF) as the methyl donor, and NADPH and FADH(2) as the reductant. The sequence is that of Flavin-dependent thymidylate synthase from Thermosipho africanus (strain TCF52B).